A 2049-amino-acid polypeptide reads, in one-letter code: Polyunsaturated fatty acid synthase subunit B (2049 aa).

2 Ketosynthase family 3 (KS3) domains span residues 15–442 (EKRI…VFEE) and 468–908 (NMRI…LLSD). Active-site for beta-ketoacyl synthase 1 activity residues include cysteine 196, histidine 333, and histidine 368. Residues 467 to 984 (NNMRIAITGM…LGETLAQEAD (518 aa)) are chain length factor (CLF) domain. Positions 1044 to 1377 (RVAFMYGEGR…QRSHVTGAMD (334 aa)) are acyltransferase (AT) domain. The segment at 1500 to 1531 (NKDNQPAVAPAATAAPTPKPKPAASSGKPVPS) is disordered. Over residues 1505 to 1531 (PAVAPAATAAPTPKPKPAASSGKPVPS) the composition is skewed to low complexity. The enoyl reductase (ER) domain stretch occupies residues 1579 to 1887 (SRAFMKTYGV…SRANKLYELF (309 aa)).

In terms of assembly, component of the polyunsaturated fatty acid synthase complex composed of at least ORF-A, ORF-B and ORF-C.

It participates in lipid metabolism; fatty acid biosynthesis. In terms of biological role, poliketide synthase-like protein; part of the polyunsaturated fatty acid synthase composed of the 3 PKS-like subunits A, B and C. While the saturated fatty acids (SFAs) in Thraustochytrium are produced by the conventional fatty acid synthase (FAS) pathway, polyunsaturated fatty acids (PUFAs) including docosahexeanoic acid (DHA) and docosapentaenoic acid (DPA) are synthesized via an anaerobical PKS pathway. PUFA synthase assimilates fatty acyl-CoA, the product of FAS, as the starter unit to synthesize DPA, and this starter unit may be butyryl-CoA, hexanoyl-CoA, or octanoyl-CoA. DPA and DHA biosynthesis seem to differ by the reduction at the N-3 position by PUFA synthase, not the extension of carbon chain. In DHA biosynthesis, PUFA synthase extends the fatty acyl chain from the methyl toward the carboxyl end, and the double bond is formed when the carbon chain is growing, instead of afterward. Therefore, PUFA synthase is unable to transform DPA to DHA, suggesting that DPA is not the precursor of DHA. Moreover, DPA molecule is partly extended by FAS KS domain, so DPA biosynthesis is less dependent on PUFA synthase KS domain than DHA. This Thraustochytrium sp. (strain ATCC 26185 / S-3) protein is Polyunsaturated fatty acid synthase subunit B.